The sequence spans 736 residues: 1,4-alpha-glucan branching enzyme GlgB (736 aa).

D415 (nucleophile) is an active-site residue. E470 serves as the catalytic Proton donor.

The protein belongs to the glycosyl hydrolase 13 family. GlgB subfamily. As to quaternary structure, monomer.

The catalysed reaction is Transfers a segment of a (1-&gt;4)-alpha-D-glucan chain to a primary hydroxy group in a similar glucan chain.. It participates in glycan biosynthesis; glycogen biosynthesis. In terms of biological role, catalyzes the formation of the alpha-1,6-glucosidic linkages in glycogen by scission of a 1,4-alpha-linked oligosaccharide from growing alpha-1,4-glucan chains and the subsequent attachment of the oligosaccharide to the alpha-1,6 position. The polypeptide is 1,4-alpha-glucan branching enzyme GlgB (Burkholderia cenocepacia (strain HI2424)).